Consider the following 192-residue polypeptide: Small ribosomal subunit protein uS5 (192 aa).

Residues 20-83 (FVDRLVHINR…EAAKRGLIRV (64 aa)) form the S5 DRBM domain. Residues 165-192 (ARRGLKVSALQARRRDAEPGSADSADAA) are disordered.

Belongs to the universal ribosomal protein uS5 family. As to quaternary structure, part of the 30S ribosomal subunit. Contacts proteins S4 and S8.

Functionally, with S4 and S12 plays an important role in translational accuracy. In terms of biological role, located at the back of the 30S subunit body where it stabilizes the conformation of the head with respect to the body. This Methylobacterium sp. (strain 4-46) protein is Small ribosomal subunit protein uS5.